The sequence spans 851 residues: Putative serine/threonine-protein kinase 019R (851 aa).

Disordered stretches follow at residues 1–24 (MATN…RTIK), 61–91 (PRVA…RGGP), 104–160 (GGAS…KRGG), 190–216 (GLSP…ARRS), and 340–400 (SRPS…GEPR). A compositionally biased stretch (low complexity) spans 125–141 (ARRQSPAEAAEASPCPE). Over residues 196-216 (SHMRKSPARRSPARRSPARRS) the composition is skewed to basic residues. The span at 340-366 (SRPSGVSRTSGTSGSSGSSASSRPPNS) shows a compositional bias: low complexity. Positions 456-851 (AVSDNVIGQG…GEREIESFTM (396 aa)) constitute a Protein kinase domain. Residues 462-470 (IGQGSWGSV) and Lys-485 each bind ATP. Asp-608 functions as the Proton acceptor in the catalytic mechanism.

It belongs to the protein kinase superfamily. Ser/Thr protein kinase family.

The enzyme catalyses L-seryl-[protein] + ATP = O-phospho-L-seryl-[protein] + ADP + H(+). The catalysed reaction is L-threonyl-[protein] + ATP = O-phospho-L-threonyl-[protein] + ADP + H(+). This is Putative serine/threonine-protein kinase 019R from Dryophytes versicolor (chameleon treefrog).